Consider the following 562-residue polypeptide: Endochitinase (562 aa).

The N-terminal stretch at 1 to 20 (MSLLYIILLFTQFLLLPTDA) is a signal peptide. A GH18 domain is found at 27-311 (TNIAVYWGQN…EILKNLLTSA (285 aa)). Glu157 acts as the Proton donor in catalysis. Disordered regions lie at residues 329-358 (TSSASTSSASTSQKKTTQSTTSTQSKSKVT) and 461-484 (TLSPTTTSTSSGSTSSGSTSSDST). A chitin-binding, high affinity region spans residues 481 to 562 (SDSTARTLAK…NFSYLESNYF (82 aa)). The N-linked (GlcNAc...) asparagine glycan is linked to Asn553.

This sequence belongs to the glycosyl hydrolase 18 family. Chitinase class V subfamily. Post-translationally, extensively glycosylated with a series of short O-linked mannose oligosaccharides ranging in size from Man(2) to Man(5).

Its subcellular location is the secreted. The protein localises to the cell wall. It catalyses the reaction Random endo-hydrolysis of N-acetyl-beta-D-glucosaminide (1-&gt;4)-beta-linkages in chitin and chitodextrins.. Functionally, chitinase is required for cell separation during growth of S.cerevisiae. The protein is Endochitinase (CTS1) of Saccharomyces cerevisiae (strain ATCC 204508 / S288c) (Baker's yeast).